The following is a 68-amino-acid chain: Conotoxin Ar5.3 (68 aa).

The signal sequence occupies residues 1–19 (MLCLPVFIILLLLASPAAS). Positions 20-53 (NPLEKRIQNDLIRAALEDADMENDPRSIIDSVKT) are excised as a propeptide.

The protein belongs to the conotoxin T superfamily. Contains 2 disulfide bonds that can be either 'C1-C3, C2-C4' or 'C1-C4, C2-C3', since these disulfide connectivities have been observed for conotoxins with cysteine framework V (for examples, see AC P0DQQ7 and AC P81755). Expressed by the venom duct.

Its subcellular location is the secreted. This Conus arenatus (Sand-dusted cone) protein is Conotoxin Ar5.3.